Here is a 127-residue protein sequence, read N- to C-terminus: Major sperm protein 152 (127 aa).

An N-acetylthreonine modification is found at Thr-2. The MSP domain occupies 9–126; it reads DIQTQPGTKI…RRKNLPIEYN (118 aa).

In terms of tissue distribution, sperm.

The protein localises to the cell projection. Its subcellular location is the pseudopodium. It is found in the cytoplasm. The protein resides in the cytoskeleton. Its function is as follows. Central component in molecular interactions underlying sperm crawling. Forms an extensive filament system that extends from sperm villipoda, along the leading edge of the pseudopod. The sequence is that of Major sperm protein 152 (msp-152) from Caenorhabditis elegans.